A 231-amino-acid polypeptide reads, in one-letter code: Putative carboxymethylenebutenolidase (231 aa).

Residues D169 and H200 contribute to the active site.

Belongs to the dienelactone hydrolase family.

The enzyme catalyses 2-(5-oxo-2,5-dihydrofuran-2-ylidene)acetate + H2O = 4-oxohex-2-enedioate + H(+). The chain is Putative carboxymethylenebutenolidase from Azospirillum brasilense.